We begin with the raw amino-acid sequence, 217 residues long: UPF0502 protein KPK_3478 (217 aa).

The protein belongs to the UPF0502 family.

The protein is UPF0502 protein KPK_3478 of Klebsiella pneumoniae (strain 342).